A 475-amino-acid polypeptide reads, in one-letter code: Lipid II flippase MurJ (475 aa).

The Cytoplasmic portion of the chain corresponds to 1–2; that stretch reads MS. The chain crosses the membrane as a helical span at residues 3 to 23; the sequence is ILFSSILFSIATFFSRILGLF. Residues 24-35 are Periplasmic-facing; sequence RDVLFAKYFGVS. Residues 36–56 traverse the membrane as a helical segment; it reads YELDAYFIAIMFPFFLRKVFG. The Cytoplasmic portion of the chain corresponds to 57 to 78; that stretch reads EGAMSSAFVPLYSEKSGEEKDK. The helical transmembrane segment at 79–99 threads the bilayer; the sequence is FLSSVINGFSLIILALVILSY. The Periplasmic portion of the chain corresponds to 100 to 123; it reads FFPELIINLFGAGSSHETKILAKK. The helical transmembrane segment at 124-144 threads the bilayer; that stretch reads LLLITSPSIYFIFLWAISYSI. At 145-150 the chain is on the cytoplasmic side; it reads LNTNNK. A helical transmembrane segment spans residues 151 to 171; that stretch reads FFWPALTPSISNITIIIGTFL. Residues 172–175 are Periplasmic-facing; the sequence is STKY. The helical transmembrane segment at 176–196 threads the bilayer; it reads GIISPTIGFLIGSILMFFSII. The Cytoplasmic segment spans residues 197–213; sequence KSIIKHKYYFTIKHFPH. The helical transmembrane segment at 214 to 238 threads the bilayer; that stretch reads FLKLFFPTFMTMVVSQINTVVDMNV. The Periplasmic portion of the chain corresponds to 239-249; sequence VSFYDKGSISY. Residues 250–271 traverse the membrane as a helical segment; the sequence is LQYASRFYLLPYGLFAVSVSTV. Residues 272 to 287 are Cytoplasmic-facing; that stretch reads VLSKISNDRKNFNYHL. Residues 288-308 form a helical membrane-spanning segment; sequence NDALKTTLFFTIPSMVGLIFL. At 309 to 332 the chain is on the periplasmic side; the sequence is STPIIRFFYEHGAFTSKDTLITSK. The helical transmembrane segment at 333 to 353 threads the bilayer; sequence ILIAYTLGLPFYGIYSTISRS. Over 354–362 the chain is Cytoplasmic; sequence YHAIKNTKT. A helical transmembrane segment spans residues 363–383; that stretch reads PFIAATIVSLSNIILDIIFGL. Residues 384 to 386 are Periplasmic-facing; the sequence is KYG. Residues 387–407 traverse the membrane as a helical segment; the sequence is PIGVALATSIAGIIGVLYLLF. At 408–416 the chain is on the cytoplasmic side; it reads SVKTFPIKD. The chain crosses the membrane as a helical span at residues 417–437; it reads FLKISLNSLIMLFVIYLTDFT. Over 438–440 the chain is Periplasmic; sequence DNE. Residues 441–461 form a helical membrane-spanning segment; sequence FWFLIQILIGILVYLIFSSIF. Topologically, residues 462 to 475 are cytoplasmic; it reads YRDLIRRFLYARKK.

This sequence belongs to the MurJ/MviN family.

The protein localises to the cell inner membrane. The protein operates within cell wall biogenesis; peptidoglycan biosynthesis. Involved in peptidoglycan biosynthesis. Transports lipid-linked peptidoglycan precursors from the inner to the outer leaflet of the cytoplasmic membrane. The protein is Lipid II flippase MurJ of Thermosipho africanus (strain TCF52B).